The sequence spans 691 residues: Methionine--tRNA ligase (691 aa).

The 'HIGH' region signature appears at 12-22 (PYANGSFHIGH). Residues Cys143, Cys146, Cys156, and Cys159 each coordinate Zn(2+). The 'KMSKS' region signature appears at 341–345 (KMSKS). Lys344 contacts ATP. One can recognise a tRNA-binding domain in the interval 585-691 (DFVKVDLRIA…PGAQPGMRIH (107 aa)).

Belongs to the class-I aminoacyl-tRNA synthetase family. MetG type 1 subfamily. As to quaternary structure, homodimer. Requires Zn(2+) as cofactor.

It localises to the cytoplasm. It catalyses the reaction tRNA(Met) + L-methionine + ATP = L-methionyl-tRNA(Met) + AMP + diphosphate. Functionally, is required not only for elongation of protein synthesis but also for the initiation of all mRNA translation through initiator tRNA(fMet) aminoacylation. The sequence is that of Methionine--tRNA ligase from Bordetella avium (strain 197N).